Consider the following 637-residue polypeptide: Threonine--tRNA ligase (637 aa).

The TGS domain occupies 1–61 (MPNVKLPDGN…KEDCSLIIVT (61 aa)). The tract at residues 242–533 (DHRKLGKALD…LIEHYAGKLP (292 aa)) is catalytic. Positions 333, 384, and 510 each coordinate Zn(2+).

It belongs to the class-II aminoacyl-tRNA synthetase family. Homodimer. The cofactor is Zn(2+).

Its subcellular location is the cytoplasm. The enzyme catalyses tRNA(Thr) + L-threonine + ATP = L-threonyl-tRNA(Thr) + AMP + diphosphate + H(+). Functionally, catalyzes the attachment of threonine to tRNA(Thr) in a two-step reaction: L-threonine is first activated by ATP to form Thr-AMP and then transferred to the acceptor end of tRNA(Thr). Also edits incorrectly charged L-seryl-tRNA(Thr). The polypeptide is Threonine--tRNA ligase (Legionella pneumophila (strain Paris)).